A 283-amino-acid polypeptide reads, in one-letter code: Phosphatidylglycerol--prolipoprotein diacylglyceryl transferase (283 aa).

The next 3 helical transmembrane spans lie at 14–34 (LGPLAVHWYGLMYLLGFALFL), 56–76 (MLMYGAVGVVVGGRLGEVLFY), and 88–108 (IFMVWKGGMSFHGGFLGVLIA). Position 139 (Arg139) interacts with a 1,2-diacyl-sn-glycero-3-phospho-(1'-sn-glycerol). A helical membrane pass occupies residues 258-278 (MGQWLSLPMIVIGVALLVFFG).

The protein belongs to the Lgt family.

Its subcellular location is the cell inner membrane. The enzyme catalyses L-cysteinyl-[prolipoprotein] + a 1,2-diacyl-sn-glycero-3-phospho-(1'-sn-glycerol) = an S-1,2-diacyl-sn-glyceryl-L-cysteinyl-[prolipoprotein] + sn-glycerol 1-phosphate + H(+). Its pathway is protein modification; lipoprotein biosynthesis (diacylglyceryl transfer). Catalyzes the transfer of the diacylglyceryl group from phosphatidylglycerol to the sulfhydryl group of the N-terminal cysteine of a prolipoprotein, the first step in the formation of mature lipoproteins. This chain is Phosphatidylglycerol--prolipoprotein diacylglyceryl transferase, found in Chromobacterium violaceum (strain ATCC 12472 / DSM 30191 / JCM 1249 / CCUG 213 / NBRC 12614 / NCIMB 9131 / NCTC 9757 / MK).